Here is a 330-residue protein sequence, read N- to C-terminus: Beta-ketoacyl-[acyl-carrier-protein] synthase III (330 aa).

Residues Cys-114 and His-257 contribute to the active site. Residues 258 to 262 (QANLR) form an ACP-binding region. Asn-287 is an active-site residue.

This sequence belongs to the thiolase-like superfamily. FabH family. Homodimer.

The protein localises to the cytoplasm. The catalysed reaction is malonyl-[ACP] + acetyl-CoA + H(+) = 3-oxobutanoyl-[ACP] + CO2 + CoA. It participates in lipid metabolism; fatty acid biosynthesis. Catalyzes the condensation reaction of fatty acid synthesis by the addition to an acyl acceptor of two carbons from malonyl-ACP. Catalyzes the first condensation reaction which initiates fatty acid synthesis and may therefore play a role in governing the total rate of fatty acid production. Possesses both acetoacetyl-ACP synthase and acetyl transacylase activities. Its substrate specificity determines the biosynthesis of branched-chain and/or straight-chain of fatty acids. The sequence is that of Beta-ketoacyl-[acyl-carrier-protein] synthase III from Nitratidesulfovibrio vulgaris (strain ATCC 29579 / DSM 644 / CCUG 34227 / NCIMB 8303 / VKM B-1760 / Hildenborough) (Desulfovibrio vulgaris).